Here is a 318-residue protein sequence, read N- to C-terminus: Deoxyribose-phosphate aldolase (318 aa).

D155 acts as the Proton donor/acceptor in catalysis. Catalysis depends on K218, which acts as the Schiff-base intermediate with acetaldehyde. K254 (proton donor/acceptor) is an active-site residue.

It belongs to the DeoC/FbaB aldolase family. DeoC type 2 subfamily. As to quaternary structure, interacts with YBX1.

The protein localises to the cytoplasm. It localises to the cytoplasmic granule. The protein resides in the nucleus. The catalysed reaction is 2-deoxy-D-ribose 5-phosphate = D-glyceraldehyde 3-phosphate + acetaldehyde. Its pathway is carbohydrate degradation; 2-deoxy-D-ribose 1-phosphate degradation; D-glyceraldehyde 3-phosphate and acetaldehyde from 2-deoxy-alpha-D-ribose 1-phosphate: step 2/2. Its function is as follows. Catalyzes a reversible aldol reaction between acetaldehyde and D-glyceraldehyde 3-phosphate to generate 2-deoxy-D-ribose 5-phosphate. Participates in stress granule (SG) assembly. May allow ATP production from extracellular deoxyinosine in conditions of energy deprivation. The polypeptide is Deoxyribose-phosphate aldolase (Dera) (Mus musculus (Mouse)).